Here is a 66-residue protein sequence, read N- to C-terminus: Phylloseptin-B1 (66 aa).

A signal peptide spans 1–22; that stretch reads MAFLKKSLFLVLFLGLVSLSIC. The propeptide occupies 23 to 46; that stretch reads EEEKRETEEKEYDQGEDDKSEEKR. L65 carries the leucine amide modification.

This sequence belongs to the frog skin active peptide (FSAP) family. Phylloseptin subfamily. As to expression, expressed by the skin glands.

The protein localises to the secreted. The protein resides in the target cell membrane. Its function is as follows. Antimicrobial peptide with activity against only a few strains of Gram-positive bacteria (S.aureus and B.megaterium). Acts in a synergistic effect in combination with Plasticin-B1 at doses that are not active alone. In Phyllomedusa bicolor (Two-colored leaf frog), this protein is Phylloseptin-B1.